We begin with the raw amino-acid sequence, 1408 residues long: DNA-directed RNA polymerase subunit beta' (1408 aa).

Zn(2+)-binding residues include C70, C72, C85, and C88. Residues D458, D460, and D462 each contribute to the Mg(2+) site. Zn(2+) is bound by residues C813, C887, C894, and C897. Positions 1387 to 1408 are disordered; it reads AELEAATATAPADAGGDSPATE. A compositionally biased stretch (low complexity) spans 1389 to 1408; the sequence is LEAATATAPADAGGDSPATE.

The protein belongs to the RNA polymerase beta' chain family. In terms of assembly, the RNAP catalytic core consists of 2 alpha, 1 beta, 1 beta' and 1 omega subunit. When a sigma factor is associated with the core the holoenzyme is formed, which can initiate transcription. It depends on Mg(2+) as a cofactor. Requires Zn(2+) as cofactor.

It catalyses the reaction RNA(n) + a ribonucleoside 5'-triphosphate = RNA(n+1) + diphosphate. Functionally, DNA-dependent RNA polymerase catalyzes the transcription of DNA into RNA using the four ribonucleoside triphosphates as substrates. The polypeptide is DNA-directed RNA polymerase subunit beta' (Polaromonas sp. (strain JS666 / ATCC BAA-500)).